The chain runs to 307 residues: Aspartate carbamoyltransferase catalytic subunit (307 aa).

Residues R51 and T52 each contribute to the carbamoyl phosphate site. K80 provides a ligand contact to L-aspartate. Residues R101, H129, and Q132 each coordinate carbamoyl phosphate. L-aspartate-binding residues include R162 and R225. The carbamoyl phosphate site is built by L264 and P265.

The protein belongs to the aspartate/ornithine carbamoyltransferase superfamily. ATCase family. Heterododecamer (2C3:3R2) of six catalytic PyrB chains organized as two trimers (C3), and six regulatory PyrI chains organized as three dimers (R2).

It catalyses the reaction carbamoyl phosphate + L-aspartate = N-carbamoyl-L-aspartate + phosphate + H(+). Its pathway is pyrimidine metabolism; UMP biosynthesis via de novo pathway; (S)-dihydroorotate from bicarbonate: step 2/3. Functionally, catalyzes the condensation of carbamoyl phosphate and aspartate to form carbamoyl aspartate and inorganic phosphate, the committed step in the de novo pyrimidine nucleotide biosynthesis pathway. The sequence is that of Aspartate carbamoyltransferase catalytic subunit from Lachnoclostridium phytofermentans (strain ATCC 700394 / DSM 18823 / ISDg) (Clostridium phytofermentans).